We begin with the raw amino-acid sequence, 425 residues long: Enolase (425 aa).

Gln-163 is a binding site for (2R)-2-phosphoglycerate. Catalysis depends on Glu-205, which acts as the Proton donor. 3 residues coordinate Mg(2+): Asp-242, Glu-285, and Asp-312. Residues Lys-337, Arg-366, Ser-367, and Lys-388 each coordinate (2R)-2-phosphoglycerate. Catalysis depends on Lys-337, which acts as the Proton acceptor.

The protein belongs to the enolase family. Mg(2+) serves as cofactor.

The protein resides in the cytoplasm. It is found in the secreted. It localises to the cell surface. The enzyme catalyses (2R)-2-phosphoglycerate = phosphoenolpyruvate + H2O. Its pathway is carbohydrate degradation; glycolysis; pyruvate from D-glyceraldehyde 3-phosphate: step 4/5. Catalyzes the reversible conversion of 2-phosphoglycerate (2-PG) into phosphoenolpyruvate (PEP). It is essential for the degradation of carbohydrates via glycolysis. The sequence is that of Enolase from Ruegeria sp. (strain TM1040) (Silicibacter sp.).